A 396-amino-acid chain; its full sequence is Elongation factor Tu 2 (396 aa).

One can recognise a tr-type G domain in the interval 10–206 (KPHVNVGTIG…AIDSYIPEPE (197 aa)). The segment at 19–26 (GHIDHGKT) is G1. Position 19-26 (19-26 (GHIDHGKT)) interacts with GTP. Threonine 26 lines the Mg(2+) pocket. The segment at 60–64 (GITIA) is G2. The tract at residues 81–84 (DCPG) is G3. GTP is bound by residues 81-85 (DCPGH) and 136-139 (NKCD). Positions 136–139 (NKCD) are G4. A G5 region spans residues 174-176 (SAL).

This sequence belongs to the TRAFAC class translation factor GTPase superfamily. Classic translation factor GTPase family. EF-Tu/EF-1A subfamily. In terms of assembly, monomer.

The protein resides in the cytoplasm. The catalysed reaction is GTP + H2O = GDP + phosphate + H(+). In terms of biological role, GTP hydrolase that promotes the GTP-dependent binding of aminoacyl-tRNA to the A-site of ribosomes during protein biosynthesis. The protein is Elongation factor Tu 2 of Desulfotalea psychrophila (strain LSv54 / DSM 12343).